The primary structure comprises 783 residues: Centrosomal protein of 89 kDa (783 aa).

Residues 28–49 form a disordered region; sequence PKAAVPRTPPPRSPNPSPERPR. A compositionally biased stretch (pro residues) spans 34–45; the sequence is RTPPPRSPNPSP. Residue S50 is modified to Phosphoserine. 2 disordered regions span residues 63-157 and 176-226; these read GRTV…DDLY and DENI…DITG. The span at 94–107 shows a compositional bias: polar residues; the sequence is ATTSQLRPRPNWQS. 2 stretches are compositionally biased toward basic and acidic residues: residues 139-155 and 196-214; these read ELGD…HSDD and QQKD…KPPL. Coiled-coil stretches lie at residues 234 to 333 and 369 to 719; these read EITR…SRYQ and LLLA…GELE.

The protein resides in the cytoplasm. It localises to the cytosol. The protein localises to the cytoskeleton. Its subcellular location is the microtubule organizing center. It is found in the centrosome. The protein resides in the spindle pole. It localises to the centriole. The protein localises to the mitochondrion intermembrane space. In terms of biological role, required for ciliogenesis. Also plays a role in mitochondrial metabolism where it may modulate complex IV activity. The sequence is that of Centrosomal protein of 89 kDa (CEP89) from Homo sapiens (Human).